A 196-amino-acid chain; its full sequence is MANGPNYKIKPRRRREGKTNYYKRYVYVISKQIRFIVRITNKYVIVQIAKIDPKGDIMVASAHSSELTKKFEWKGDENNTPSAYLTGYLAALRAVKKGVTECVADIGLHVPSKGNKVFYAIKGAIDAGLKIPIGDISIENDRIKGEHIAKYAEKLKSENLDLYNKLFSRYLGRGLNPENLPSHFEEILNKIKSSGG.

The protein belongs to the universal ribosomal protein uL18 family. In terms of assembly, part of the 50S ribosomal subunit. Contacts the 5S and 23S rRNAs.

This is one of the proteins that bind and probably mediate the attachment of the 5S RNA into the large ribosomal subunit, where it forms part of the central protuberance. The sequence is that of Large ribosomal subunit protein uL18 from Saccharolobus islandicus (strain L.S.2.15 / Lassen #1) (Sulfolobus islandicus).